Here is a 301-residue protein sequence, read N- to C-terminus: Fatty acid elongase 3 (301 aa).

A run of 7 helical transmembrane segments spans residues Val-31–Met-51, Ile-64–Tyr-84, Ala-122–Leu-142, Val-161–Val-181, Gly-187–Val-207, Phe-219–Cys-239, and Phe-257–Phe-277. A HxxHH motif motif is present at residues His-165–His-169. The Nucleophile role is filled by His-168.

Belongs to the ELO family.

Its subcellular location is the endoplasmic reticulum membrane. It carries out the reaction an acyl-CoA + malonyl-CoA + H(+) = a 3-oxoacyl-CoA + CO2 + CoA. It functions in the pathway lipid metabolism; fatty acid biosynthesis. Involved in the synthesis of fatty acids. Elongates C14 fatty acids to C18. The chain is Fatty acid elongase 3 from Trypanosoma brucei brucei (strain 927/4 GUTat10.1).